Reading from the N-terminus, the 427-residue chain is UDP-N-acetylglucosamine 1-carboxyvinyltransferase 1 (427 aa).

Position 23–24 (23–24) interacts with phosphoenolpyruvate; the sequence is KN. Arginine 96 provides a ligand contact to UDP-N-acetyl-alpha-D-glucosamine. Residue cysteine 120 is the Proton donor of the active site. A 2-(S-cysteinyl)pyruvic acid O-phosphothioketal modification is found at cysteine 120. Residues 125–129, aspartate 309, and valine 331 each bind UDP-N-acetyl-alpha-D-glucosamine; that span reads RPIDL.

Belongs to the EPSP synthase family. MurA subfamily.

It is found in the cytoplasm. The catalysed reaction is phosphoenolpyruvate + UDP-N-acetyl-alpha-D-glucosamine = UDP-N-acetyl-3-O-(1-carboxyvinyl)-alpha-D-glucosamine + phosphate. The protein operates within cell wall biogenesis; peptidoglycan biosynthesis. Its function is as follows. Cell wall formation. Adds enolpyruvyl to UDP-N-acetylglucosamine. This Streptococcus pneumoniae serotype 4 (strain ATCC BAA-334 / TIGR4) protein is UDP-N-acetylglucosamine 1-carboxyvinyltransferase 1.